Reading from the N-terminus, the 64-residue chain is Arasin 1 (64 aa).

The first 25 residues, 1–25 (MERRTLLVVLLVCSCVVAAAAEASP), serve as a signal peptide directing secretion. Positions 22–43 (EASPSRWPSPGRPRPFPGRPKP) are disordered. The interval 26–48 (SRWPSPGRPRPFPGRPKPIFRPR) is pro/Arg-rich region responsible for antibacterial and antifungal activity. Positions 31–43 (PGRPRPFPGRPKP) are enriched in pro residues. Residues 49-62 (PCNCYAPPCPCDRW) are cystein-containing C-terminal region important for stability but not essential for antimicrobial activity. 2 disulfide bridges follow: Cys-50–Cys-59 and Cys-52–Cys-57. Residues 63–64 (RH) constitute a propeptide that is removed on maturation.

In terms of assembly, interacts with chitin through the N-terminal region (26-48). This interaction may be important, since chitin is a component of the fungal cell wall, as well as of the crab exoskeleton (permitting a possible action of arasin in wound healing in case of lesions). Post-translationally, disulfide bonds are important for activity especially against Gram-negative bacteria, since the linearization of the peptide causes a strong decrease of activity on these bacteria. In terms of tissue distribution, mainly expressed in hemocytes. No or very low expression in heart, gills, inestines, and epidermis.

Functionally, antimicrobial peptide that has a large activity spectrum with activity against Gram-positive, Gram-negative bacteria, as well as against fungi. Shows activity at micromolar concentrations. Displays minimal inhibitory concentration (MIC) values lower than minimal bactericidal concentrations (MBC). Synthetic peptides with similar activities than the full length peptide (composed of the first 23 or 25 amino acids (Arasin 1(26-48) or Arasin 1(26-50))) may have a dual mode of action depending on the peptide concentrations. At MIC concentrations, the peptide penetrates into the cytoplasm of target cells (tested on the Gram-negative E.coli). The two inner membrane proteins YgdD and SbmA may be required for this uptake. At concentrations higher than MIC, arasin may act by disrupting membranes. Full-length and N-terminal peptides do not show hemolytic activity. In Hyas araneus (Atlantic lyre crab), this protein is Arasin 1.